We begin with the raw amino-acid sequence, 551 residues long: Probable CoA ligase CCL5 (551 aa).

ATP is bound by residues 204–212, 345–350, Asp-431, 443–446, and Lys-537; these read SSGTTGASK, QGYGLT, and VVDR. The segment at 274 to 345 is SBD1; the sequence is EIHEMLSAIE…ENYPTVSILQ (72 aa). An SBD2 region spans residues 346 to 410; it reads GYGLTESTGI…LRGPTIMKGY (65 aa).

The protein belongs to the ATP-dependent AMP-binding enzyme family. In terms of tissue distribution, mostly expressed at low levels in glandular trichomes (lupulin glands) after flowering, and, to a lower extent, in stems, leaves, cones and flowers.

The protein resides in the cytoplasm. The protein localises to the cytosol. This is Probable CoA ligase CCL5 from Humulus lupulus (European hop).